The chain runs to 132 residues: ATP synthase epsilon chain (132 aa).

This sequence belongs to the ATPase epsilon chain family. As to quaternary structure, F-type ATPases have 2 components, CF(1) - the catalytic core - and CF(0) - the membrane proton channel. CF(1) has five subunits: alpha(3), beta(3), gamma(1), delta(1), epsilon(1). CF(0) has four main subunits: a, b, b' and c.

Its subcellular location is the cellular chromatophore membrane. Its function is as follows. Produces ATP from ADP in the presence of a proton gradient across the membrane. This Rhodobacter capsulatus (Rhodopseudomonas capsulata) protein is ATP synthase epsilon chain (atpC).